A 228-amino-acid polypeptide reads, in one-letter code: Ras-related protein Rab-33B (228 aa).

GTP contacts are provided by asparagine 41, valine 42, glycine 43, lysine 44, threonine 45, cysteine 46, threonine 60, and threonine 63. Threonine 45 contributes to the Mg(2+) binding site. The Switch 1 signature appears at 54–66; sequence GRFPQRTEATIGV. Residues threonine 63 and aspartate 86 each contribute to the Mg(2+) site. Residues 87–106 carry the Switch 2 motif; that stretch reads TAGQERFRKSMVQHYYRNVH. GTP contacts are provided by glycine 89, asparagine 146, lysine 147, aspartate 149, alanine 177, and lysine 178. Residues cysteine 226 and cysteine 228 are each lipidated (S-geranylgeranyl cysteine). Cysteine 228 carries the post-translational modification Cysteine methyl ester.

The protein belongs to the small GTPase superfamily. Rab family. Interacts (GTP- and GDP-bound forms) with ATG16L1; the complex consists of a tetramer where two RAB33B molecules bind independently one molecule of the ATG16L1 homodimer; the interaction promotes ATG12-ATG5-ATG16L1 complex recruitment to phagophores. Interacts with ATG16L2; however interaction is approximately hundred times lower than for ATG16L1. Interacts with RIC1 (via C-terminus domain); the interaction is direct with a preference for RAB33B-GTP. Interacts with RGP1. Requires Mg(2+) as cofactor.

The protein resides in the golgi apparatus membrane. It is found in the golgi apparatus. The protein localises to the cis-Golgi network. It localises to the preautophagosomal structure membrane. The catalysed reaction is GTP + H2O = GDP + phosphate + H(+). Its activity is regulated as follows. Regulated by guanine nucleotide exchange factors (GEFs) which promote the exchange of bound GDP for free GTP. Regulated by GTPase activating proteins (GAPs) such as SGSM2 which increase the GTP hydrolysis activity. Inhibited by GDP dissociation inhibitors (GDIs). Functionally, the small GTPases Rab are key regulators of intracellular membrane trafficking, from the formation of transport vesicles to their fusion with membranes. Rabs cycle between an inactive GDP-bound form and an active GTP-bound form that is able to recruit to membranes different sets of downstream effectors directly responsible for vesicle formation, movement, tethering and fusion. RAB33B acts, in coordination with RAB6A, to regulate intra-Golgi retrograde trafficking. Participates in autophagosome formation by recruiting the ATG12-ATG5-ATG16L1 complex to phagophores, probably in a nucleotide-independent manner. The sequence is that of Ras-related protein Rab-33B (RAB33B) from Gallus gallus (Chicken).